We begin with the raw amino-acid sequence, 234 residues long: MQHWLDKLTDLAAIEGDECILKTGLADIADHFGFTGYAYLHIQHRHITAVTNYHRQWQSTYFDKKFEALDPVVKRARSRKHIFTWSGEHERPTLSKDERAFYDHASDFGIRSGITIPIKTANGFMSMFTMASDKPVIDLDREIDAVAAAATIGQIHARISFLRTTPTAEDAAWLDPKEATYLRWIAVGKTMEEIADVEGVKYNSVRVKLREAMKRFDVRSKAHLTALAIRRKLI.

Residues 167-232 form the HTH luxR-type domain; sequence TAEDAAWLDP…HLTALAIRRK (66 aa). Residues 191 to 210 constitute a DNA-binding region (H-T-H motif); it reads MEEIADVEGVKYNSVRVKLR.

This sequence belongs to the autoinducer-regulated transcriptional regulatory protein family.

Functionally, positive regulation of conjugal transfer of Ti plasmids. TraR activates target genes in the presence of AAI and also activates traR and traI themselves. In Rhizobium radiobacter (Agrobacterium tumefaciens), this protein is Transcriptional activator protein TraR (traR).